A 142-amino-acid polypeptide reads, in one-letter code: Large ribosomal subunit protein uL11 (142 aa).

The disordered stretch occupies residues Ala84–Asp103.

It belongs to the universal ribosomal protein uL11 family. As to quaternary structure, part of the ribosomal stalk of the 50S ribosomal subunit. Interacts with L10 and the large rRNA to form the base of the stalk. L10 forms an elongated spine to which L12 dimers bind in a sequential fashion forming a multimeric L10(L12)X complex. In terms of processing, one or more lysine residues are methylated.

Functionally, forms part of the ribosomal stalk which helps the ribosome interact with GTP-bound translation factors. This chain is Large ribosomal subunit protein uL11, found in Aliivibrio salmonicida (strain LFI1238) (Vibrio salmonicida (strain LFI1238)).